A 192-amino-acid chain; its full sequence is Bifunctional protein PyrR (192 aa).

A PRPP-binding motif is present at residues 107–119 (VVLVDDVLFSGRT).

The protein belongs to the purine/pyrimidine phosphoribosyltransferase family. PyrR subfamily.

It catalyses the reaction UMP + diphosphate = 5-phospho-alpha-D-ribose 1-diphosphate + uracil. In terms of biological role, regulates the transcription of the pyrimidine nucleotide (pyr) operon in response to exogenous pyrimidines. Its function is as follows. Also displays a weak uracil phosphoribosyltransferase activity which is not physiologically significant. The chain is Bifunctional protein PyrR from Corynebacterium efficiens (strain DSM 44549 / YS-314 / AJ 12310 / JCM 11189 / NBRC 100395).